Reading from the N-terminus, the 662-residue chain is Acyl-coenzyme A oxidase acox-1.4 (662 aa).

FAD contacts are provided by residues 148 to 151 (YAQT), 156 to 157 (GT), and G190. Substrate-binding positions include 284-287 (KVNH) and R294. Residues R319 and 339–342 (QQHR) each bind FAD. Residues H341, S391, H395, and Q403 each coordinate ATP. G410 contacts FAD. Residue 432-433 (YE) participates in substrate binding. The Proton acceptor role is filled by E433. E435 provides a ligand contact to FAD. ATP contacts are provided by residues 526–529 (RASR) and Y574. Positions 660–662 (AKL) match the Microbody targeting signal motif.

This sequence belongs to the acyl-CoA oxidase family. As to quaternary structure, homodimer. FAD serves as cofactor.

It localises to the peroxisome. It catalyses the reaction asc-C9-CoA + O2 = asc-DeltaC9-CoA + H2O2. It participates in lipid metabolism; peroxisomal fatty acid beta-oxidation. Activated by ATP. ATP binding leads to a conformational change that promotes FAD cofactor binding and enzyme activity. ATP binding likely occurs during acox-1.4 folding and/or dimer formation. Involved in the first step of peroxisomal beta-oxidation by catalyzing the desaturation of fatty acid-derived side chains of ascaroside pheromones, which regulates development and behavior. Specifically, shortens ascarosides with a 9-carbon side chain (asc-C9) and, in association with acox-1.1, may contribute to the shortening of ascarosides with a 11-carbon side chain (asc-C11). May contribute to the production of indol-3-carbonyl(IC)-ascarosides in association with acox-1.1 and acox-3. The chain is Acyl-coenzyme A oxidase acox-1.4 from Caenorhabditis elegans.